The primary structure comprises 101 residues: MAHKKAGGSSRNGRDSRSKRLGIKKYGGEYVSSGNILVRQRGTKFHPGENVKCGKDYTLYSIIEGIVKFKKRGKLKKKYISVIKLNNLNKKLQNRQISIKY.

The interval 1–21 is disordered; it reads MAHKKAGGSSRNGRDSRSKRL.

It belongs to the bacterial ribosomal protein bL27 family.

The sequence is that of Large ribosomal subunit protein bL27 from Buchnera aphidicola subsp. Cinara cedri (strain Cc).